A 428-amino-acid polypeptide reads, in one-letter code: Tol-Pal system protein TolB (428 aa).

The N-terminal stretch at 1–24 (MPSLKTLLRGVLVAAMLVAGSARA) is a signal peptide.

This sequence belongs to the TolB family. As to quaternary structure, the Tol-Pal system is composed of five core proteins: the inner membrane proteins TolA, TolQ and TolR, the periplasmic protein TolB and the outer membrane protein Pal. They form a network linking the inner and outer membranes and the peptidoglycan layer.

Its subcellular location is the periplasm. Part of the Tol-Pal system, which plays a role in outer membrane invagination during cell division and is important for maintaining outer membrane integrity. The chain is Tol-Pal system protein TolB from Chromobacterium violaceum (strain ATCC 12472 / DSM 30191 / JCM 1249 / CCUG 213 / NBRC 12614 / NCIMB 9131 / NCTC 9757 / MK).